The following is a 602-amino-acid chain: MSQQLQSRRLRQPIVVVLGHVDHGKTTLLDKIRGTAVVKKEPGEMTQEVGASFVPTSVIEKIAEPLKKTFPIKLEIPGLLFIDTPGHELFSNLRRRGGSVADIAILVVDVVEGFQKQTYESLEILRSRKVPFLVAANKIDRIPGWKPIDTYSFLESIKSQRKDVQTQLDNYVYRLVGQLAELGFNADRFDRIRDFTKTVAIVPVSAKTGEGIAELLALLAGLTQNYMKTKLRFAEGPAKGVILEVKELQGLGYTIDVIIYDGILKKNDTIIIGGLNGPIVTKVRSILVPKPLQDIKVVKTDLTQIDEVYAAAGVKIYAPELENALAGSPLFVAENEQQIEEYKKIIQEEIASVKYYNANIAGIVVKADSLGSLEAIVEGLKQKNIPIRLADIGPITKKDITEAELTLQEAKEYGIIAAFRVKPLQGIEVPNNIKLIYSEIIYQLIDDIEKYITEVRESEKRRTLDSLILPGKFRLIPGYVFRRSDPVIVGVEVLGGIIRPKFPVMKKDGKRVGEILQIQDNKKSVDRATKGMEVAVSIKGNIMVGRQIDEGEILYTDVPKEDLEILLTKYKDIITDDMKEVIKEIINIKRVNDPTYALGLKV.

Residues 10–227 enclose the tr-type G domain; it reads LRQPIVVVLG…LLAGLTQNYM (218 aa). The segment at 19 to 26 is G1; that stretch reads GHVDHGKT. Residue 19 to 26 participates in GTP binding; that stretch reads GHVDHGKT. Positions 44-48 are G2; it reads EMTQE. A G3 region spans residues 83–86; sequence DTPG. Residues 83 to 87 and 137 to 140 contribute to the GTP site; these read DTPGH and NKID. A G4 region spans residues 137-140; that stretch reads NKID. A G5 region spans residues 205–207; that stretch reads SAK.

It belongs to the TRAFAC class translation factor GTPase superfamily. Classic translation factor GTPase family. IF-2 subfamily.

Function in general translation initiation by promoting the binding of the formylmethionine-tRNA to ribosomes. Seems to function along with eIF-2. The protein is Probable translation initiation factor IF-2 of Sulfurisphaera tokodaii (strain DSM 16993 / JCM 10545 / NBRC 100140 / 7) (Sulfolobus tokodaii).